Reading from the N-terminus, the 146-residue chain is Prolactin-inducible protein homolog (146 aa).

The first 28 residues, 1 to 28, serve as a signal peptide directing secretion; that stretch reads MRLFQLLFRASPATLLLVLCLQLGANKA. At glutamine 29 the chain carries Pyrrolidone carboxylic acid. 2 cysteine pairs are disulfide-bonded: cysteine 65-cysteine 91 and cysteine 89-cysteine 123. A glycan (N-linked (GlcNAc...) asparagine) is linked at asparagine 105.

Belongs to the PIP family. As to quaternary structure, monomer. Interacts with AZGP1.

It is found in the secreted. The polypeptide is Prolactin-inducible protein homolog (PIP) (Pan troglodytes (Chimpanzee)).